The chain runs to 92 residues: uncharacterized protein (92 aa).

Residues 1-23 (MNPAIVVIIVLLVAALLIWACKA) form the signal peptide.

This is an uncharacterized protein from Acheta domesticus (House cricket).